Reading from the N-terminus, the 367-residue chain is Peptide chain release factor 2 (367 aa).

Glutamine 254 carries the post-translational modification N5-methylglutamine.

Belongs to the prokaryotic/mitochondrial release factor family. In terms of processing, methylated by PrmC. Methylation increases the termination efficiency of RF2.

It localises to the cytoplasm. In terms of biological role, peptide chain release factor 2 directs the termination of translation in response to the peptide chain termination codons UGA and UAA. This is Peptide chain release factor 2 from Acidovorax ebreus (strain TPSY) (Diaphorobacter sp. (strain TPSY)).